A 320-amino-acid chain; its full sequence is Malate dehydrogenase (320 aa).

Residues 10–15 (GAGQIG) and Asp34 contribute to the NAD(+) site. 2 residues coordinate substrate: Arg83 and Arg89. NAD(+)-binding positions include Asn96 and 119–121 (ITN). Positions 121 and 152 each coordinate substrate. His176 (proton acceptor) is an active-site residue.

It belongs to the LDH/MDH superfamily. MDH type 3 family.

It catalyses the reaction (S)-malate + NAD(+) = oxaloacetate + NADH + H(+). Catalyzes the reversible oxidation of malate to oxaloacetate. The protein is Malate dehydrogenase of Dinoroseobacter shibae (strain DSM 16493 / NCIMB 14021 / DFL 12).